The primary structure comprises 434 residues: Nicotinate phosphoribosyltransferase (434 aa).

H242 carries the post-translational modification Phosphohistidine; by autocatalysis.

This sequence belongs to the NAPRTase family. Post-translationally, transiently phosphorylated on a His residue during the reaction cycle. Phosphorylation strongly increases the affinity for substrates and increases the rate of nicotinate D-ribonucleotide production. Dephosphorylation regenerates the low-affinity form of the enzyme, leading to product release.

It catalyses the reaction nicotinate + 5-phospho-alpha-D-ribose 1-diphosphate + ATP + H2O = nicotinate beta-D-ribonucleotide + ADP + phosphate + diphosphate. It functions in the pathway cofactor biosynthesis; NAD(+) biosynthesis; nicotinate D-ribonucleotide from nicotinate: step 1/1. Functionally, catalyzes the synthesis of beta-nicotinate D-ribonucleotide from nicotinate and 5-phospho-D-ribose 1-phosphate at the expense of ATP. This Brucella anthropi (strain ATCC 49188 / DSM 6882 / CCUG 24695 / JCM 21032 / LMG 3331 / NBRC 15819 / NCTC 12168 / Alc 37) (Ochrobactrum anthropi) protein is Nicotinate phosphoribosyltransferase.